The following is a 390-amino-acid chain: Homoserine O-succinyltransferase (390 aa).

The AB hydrolase-1 domain occupies 56–365 (NAVLICHALS…SPHGHDAFLL (310 aa)). The active-site Nucleophile is the Ser162. Arg232 serves as a coordination point for substrate. Residues Asp327 and His360 contribute to the active site. Asp361 lines the substrate pocket.

It belongs to the AB hydrolase superfamily. MetX family. In terms of assembly, homodimer.

It is found in the cytoplasm. It catalyses the reaction L-homoserine + succinyl-CoA = O-succinyl-L-homoserine + CoA. It participates in amino-acid biosynthesis; L-methionine biosynthesis via de novo pathway; O-succinyl-L-homoserine from L-homoserine: step 1/1. Transfers a succinyl group from succinyl-CoA to L-homoserine, forming succinyl-L-homoserine. In vitro, also has serine succinyl transferase activity. In Litchfieldella anticariensis (strain DSM 16096 / CECT 5854 / CIP 108499 / LMG 22089 / FP35) (Halomonas anticariensis), this protein is Homoserine O-succinyltransferase.